The following is a 580-amino-acid chain: Putative adenine deaminase YerA (580 aa).

The residue at position 399 (S399) is a Phosphoserine.

The protein belongs to the metallo-dependent hydrolases superfamily. Adenine deaminase family.

It carries out the reaction adenine + H2O + H(+) = hypoxanthine + NH4(+). The sequence is that of Putative adenine deaminase YerA (yerA) from Bacillus subtilis (strain 168).